We begin with the raw amino-acid sequence, 152 residues long: Flagellar assembly factor FliW (152 aa).

The protein belongs to the FliW family. As to quaternary structure, interacts with translational regulator CsrA and flagellin(s).

It is found in the cytoplasm. Acts as an anti-CsrA protein, binds CsrA and prevents it from repressing translation of its target genes, one of which is flagellin. Binds to flagellin and participates in the assembly of the flagellum. The protein is Flagellar assembly factor FliW of Caldicellulosiruptor saccharolyticus (strain ATCC 43494 / DSM 8903 / Tp8T 6331).